Here is a 495-residue protein sequence, read N- to C-terminus: Glycerol kinase (495 aa).

Residue Thr-11 coordinates ADP. ATP-binding residues include Thr-11, Thr-12, and Ser-13. Residue Thr-11 coordinates sn-glycerol 3-phosphate. Position 15 (Arg-15) interacts with ADP. Residues Arg-81, Glu-82, Tyr-133, and Asp-242 each coordinate sn-glycerol 3-phosphate. Glycerol contacts are provided by Arg-81, Glu-82, Tyr-133, Asp-242, and Gln-243. 2 residues coordinate ADP: Thr-264 and Gly-307. ATP contacts are provided by Thr-264, Gly-307, Gln-311, and Gly-410. ADP is bound at residue Gly-410.

Belongs to the FGGY kinase family.

It catalyses the reaction glycerol + ATP = sn-glycerol 3-phosphate + ADP + H(+). The protein operates within polyol metabolism; glycerol degradation via glycerol kinase pathway; sn-glycerol 3-phosphate from glycerol: step 1/1. With respect to regulation, inhibited by fructose 1,6-bisphosphate (FBP). Key enzyme in the regulation of glycerol uptake and metabolism. Catalyzes the phosphorylation of glycerol to yield sn-glycerol 3-phosphate. This chain is Glycerol kinase, found in Roseobacter denitrificans (strain ATCC 33942 / OCh 114) (Erythrobacter sp. (strain OCh 114)).